Consider the following 183-residue polypeptide: Adenine phosphoribosyltransferase (183 aa).

This sequence belongs to the purine/pyrimidine phosphoribosyltransferase family. As to quaternary structure, homodimer.

Its subcellular location is the cytoplasm. It catalyses the reaction AMP + diphosphate = 5-phospho-alpha-D-ribose 1-diphosphate + adenine. It functions in the pathway purine metabolism; AMP biosynthesis via salvage pathway; AMP from adenine: step 1/1. Its function is as follows. Catalyzes a salvage reaction resulting in the formation of AMP, that is energically less costly than de novo synthesis. The protein is Adenine phosphoribosyltransferase of Proteus mirabilis (strain HI4320).